We begin with the raw amino-acid sequence, 476 residues long: MVAAPTTATELKLGVDCVIADINQAAFGRKELDIAETEMPGLMALREKYGTEKPLKGARIAGSLHMTIQTACLIETLVELGAEVRWASCNIFSTQDHAAAAIAAQNIPVFAVKGETLEEYWEYTHRILEWGDGGSPNMILDDGGDATGLVMLGSKAEQDITVLDNPSNEEETFLFASIKKKLAQDPTFYSRTKAEIQGVTEETTTGVARLYKMQKSGELPFPAINVNDSVTKSKFDNLYGCRESLVDSIKRATDVMVAGKQALVMGYGDVGKGSAQSLRGLGATVCIAEVDPICALQAAMEGYRVVRLEDVVEEMDIFVTATGNYQVIRNEHLEKMKDEAIVCNIGHFDNEIDVASLKGYEWDNIKPQVDHITLPSGNRIILLAEGRLVNLGCATGHPSFVMSNSFTNQVLAQIELFTKGNEYGKEVYVLPKHLDEMVARLHLDRIGAKLTELSKDQADYINVPVEGPYKPDHYRY.

Residues Thr67, Asp142, and Glu202 each contribute to the substrate site. NAD(+) is bound at residue 203–205 (TTT). Positions 232 and 236 each coordinate substrate. Residues Asn237, 266–271 (GYGDVG), Glu289, Asn324, 345–347 (IGH), and Asn390 contribute to the NAD(+) site.

The protein belongs to the adenosylhomocysteinase family. Requires NAD(+) as cofactor.

It is found in the cytoplasm. The enzyme catalyses S-adenosyl-L-homocysteine + H2O = L-homocysteine + adenosine. It participates in amino-acid biosynthesis; L-homocysteine biosynthesis; L-homocysteine from S-adenosyl-L-homocysteine: step 1/1. Functionally, may play a key role in the regulation of the intracellular concentration of adenosylhomocysteine. This is Adenosylhomocysteinase from Parasynechococcus marenigrum (strain WH8102).